Consider the following 90-residue polypeptide: Small ribosomal subunit protein uS15c (90 aa).

It belongs to the universal ribosomal protein uS15 family. In terms of assembly, part of the 30S ribosomal subunit.

The protein resides in the plastid. It localises to the chloroplast. The chain is Small ribosomal subunit protein uS15c (rps15) from Dioscorea elephantipes (Elephant's foot yam).